The chain runs to 163 residues: Nucleotide-binding protein Cla_1551 (163 aa).

It belongs to the YajQ family.

Functionally, nucleotide-binding protein. This Campylobacter lari (strain RM2100 / D67 / ATCC BAA-1060) protein is Nucleotide-binding protein Cla_1551.